The following is a 200-amino-acid chain: Riboflavin synthase (200 aa).

2 Lumazine-binding repeats span residues 1 to 97 (MFSG…IGGH) and 98 to 190 (LLSG…VDTV). 2,4-dihydroxypteridine contacts are provided by residues 4 to 6 (GII), 48 to 50 (CLT), 62 to 67 (DVIPET), 101 to 103 (GHV), lysine 132, 141 to 143 (SLT), and 155 to 160 (GLIPET).

Homotrimer.

It carries out the reaction 2 6,7-dimethyl-8-(1-D-ribityl)lumazine + H(+) = 5-amino-6-(D-ribitylamino)uracil + riboflavin. It participates in cofactor biosynthesis; riboflavin biosynthesis; riboflavin from 2-hydroxy-3-oxobutyl phosphate and 5-amino-6-(D-ribitylamino)uracil: step 2/2. Catalyzes the dismutation of two molecules of 6,7-dimethyl-8-ribityllumazine, resulting in the formation of riboflavin and 5-amino-6-(D-ribitylamino)uracil. This chain is Riboflavin synthase (ribE), found in Chlamydia pneumoniae (Chlamydophila pneumoniae).